Consider the following 249-residue polypeptide: DNA repair protein RecO (249 aa).

This sequence belongs to the RecO family.

In terms of biological role, involved in DNA repair and RecF pathway recombination. The protein is DNA repair protein RecO of Rhodopseudomonas palustris (strain BisB5).